The primary structure comprises 175 residues: Auxin-responsive protein IAA28 (175 aa).

Residues 1-39 (MEEEKRLELRLAPPCHQFTSNNNINGSKQKSSTKETSFL) form a disordered region. Positions 7-11 (LELRL) match the EAR-like (transcriptional repression) motif. Over residues 17-39 (QFTSNNNINGSKQKSSTKETSFL) the composition is skewed to polar residues. In terms of domain architecture, PB1 spans 80-161 (ELYVKINMEG…TVKRLHVLKT (82 aa)).

The protein belongs to the Aux/IAA family. In terms of assembly, homodimers and heterodimers. Interacts with TPL. As to expression, in roots and inflorescence stems.

It localises to the nucleus. Functionally, aux/IAA proteins are short-lived transcriptional factors that function as repressors of early auxin response genes at low auxin concentrations. Repression is thought to result from the interaction with auxin response factors (ARFs), proteins that bind to the auxin-responsive promoter element (AuxRE). Formation of heterodimers with ARF proteins may alter their ability to modulate early auxin response genes expression. This is Auxin-responsive protein IAA28 (IAA28) from Arabidopsis thaliana (Mouse-ear cress).